Reading from the N-terminus, the 126-residue chain is Histone H2B (126 aa).

Residues 1–12 (MPEPAKSAPAAK) show a composition bias toward low complexity. Positions 1–35 (MPEPAKSAPAAKKGSKKAVSKVQKKDGKKRRKSRK) are disordered. Lys-6 and Lys-13 each carry N6-acetyllysine. Ser-15 is subject to Phosphoserine. N6-acetyllysine occurs at positions 16 and 21. The O-linked (GlcNAc) serine glycan is linked to Ser-113. Lys-121 participates in a covalent cross-link: Glycyl lysine isopeptide (Lys-Gly) (interchain with G-Cter in ubiquitin).

This sequence belongs to the histone H2B family. As to quaternary structure, the nucleosome is a histone octamer containing two molecules each of H2A, H2B, H3 and H4 assembled in one H3-H4 heterotetramer and two H2A-H2B heterodimers. The octamer wraps approximately 147 bp of DNA. Monoubiquitination of Lys-121 by BRE1 gives a specific tag for epigenetic transcriptional activation and is also prerequisite for histone H3 'Lys-4' and 'Lys-79' methylation. Post-translationally, phosphorylated on Ser-15 during apoptosis; which facilitates apoptotic chromatin condensation. In terms of processing, glcNAcylation at Ser-113 promotes monoubiquitination of Lys-121. It fluctuates in response to extracellular glucose, and associates with transcribed genes. In terms of tissue distribution, expressed by the skin granular glands.

The protein resides in the nucleus. The protein localises to the secreted. Its subcellular location is the chromosome. Core component of nucleosome. Nucleosomes wrap and compact DNA into chromatin, limiting DNA accessibility to the cellular machineries which require DNA as a template. Histones thereby play a central role in transcription regulation, DNA repair, DNA replication and chromosomal stability. DNA accessibility is regulated via a complex set of post-translational modifications of histones, also called histone code, and nucleosome remodeling. Functionally, has antibacterial activity against the Gram-negative bacteria E.coli and the Gram-positive bacteria S.aureus. The polypeptide is Histone H2B (Zhangixalus schlegelii (Japanese gliding frog)).